A 533-amino-acid chain; its full sequence is CTP synthase (533 aa).

Residues 1–265 form an amidoligase domain region; sequence MTKFIFVTGG…PAYLARRLGL (265 aa). Serine 13 lines the CTP pocket. Serine 13 provides a ligand contact to UTP. 14–19 serves as a coordination point for ATP; that stretch reads GLGKGI. Position 54 (tyrosine 54) interacts with L-glutamine. Position 71 (aspartate 71) interacts with ATP. Mg(2+) is bound by residues aspartate 71 and glutamate 139. CTP is bound by residues 146–148, 186–191, and lysine 222; these read DIE and KTKPTQ. Residues 186–191 and lysine 222 each bind UTP; that span reads KTKPTQ. In terms of domain architecture, Glutamine amidotransferase type-1 spans 290–532; the sequence is EIAIVGKYVK…VEAAKKKKYG (243 aa). Position 351 (glycine 351) interacts with L-glutamine. Cysteine 378 serves as the catalytic Nucleophile; for glutamine hydrolysis. Residues 379–382, glutamate 402, and arginine 459 each bind L-glutamine; that span reads FGFQ. Active-site residues include histidine 505 and glutamate 507.

Belongs to the CTP synthase family. As to quaternary structure, homotetramer.

The enzyme catalyses UTP + L-glutamine + ATP + H2O = CTP + L-glutamate + ADP + phosphate + 2 H(+). It catalyses the reaction L-glutamine + H2O = L-glutamate + NH4(+). It carries out the reaction UTP + NH4(+) + ATP = CTP + ADP + phosphate + 2 H(+). Its pathway is pyrimidine metabolism; CTP biosynthesis via de novo pathway; CTP from UDP: step 2/2. Allosterically activated by GTP, when glutamine is the substrate; GTP has no effect on the reaction when ammonia is the substrate. The allosteric effector GTP functions by stabilizing the protein conformation that binds the tetrahedral intermediate(s) formed during glutamine hydrolysis. Inhibited by the product CTP, via allosteric rather than competitive inhibition. Functionally, catalyzes the ATP-dependent amination of UTP to CTP with either L-glutamine or ammonia as the source of nitrogen. Regulates intracellular CTP levels through interactions with the four ribonucleotide triphosphates. The polypeptide is CTP synthase (Thermococcus kodakarensis (strain ATCC BAA-918 / JCM 12380 / KOD1) (Pyrococcus kodakaraensis (strain KOD1))).